The following is a 214-amino-acid chain: GTP-binding nuclear protein GSP1 (214 aa).

A Small GTPase Ran-type domain is found at 4–172; that stretch reads RELTYKICLI…LHLARIFTGR (169 aa). 17–22 contributes to the GTP binding site; the sequence is GVGKTT. The switch-I stretch occupies residues 34–42; sequence KNYNATVGA. Residues G66, 121–124, and 151–153 contribute to the GTP site; these read NKID and SAK. Positions 66–82 are switch-II; the sequence is GQEKKAVLKDVYYIGAS.

The protein belongs to the small GTPase superfamily. Ran family. Found in a nuclear export complex with RanGTP, exportin and pre-miRNA.

It is found in the nucleus. In terms of biological role, GTP-binding protein involved in nucleocytoplasmic transport. Required for the import of protein into the nucleus and also for RNA export. The chain is GTP-binding nuclear protein GSP1 (GSP1) from Encephalitozoon cuniculi (strain GB-M1) (Microsporidian parasite).